We begin with the raw amino-acid sequence, 89 residues long: Putative septation protein SpoVG (89 aa).

The protein belongs to the SpoVG family.

Could be involved in septation. This Heliobacterium modesticaldum (strain ATCC 51547 / Ice1) protein is Putative septation protein SpoVG.